Consider the following 164-residue polypeptide: Putative F-box protein At1g59675 (164 aa).

The 48-residue stretch at 9 to 56 (SQSDHVPLDLTIEILSRLPAKSVGRFRSVSKLWSANTTSQNFINSFAT) folds into the F-box domain.

This Arabidopsis thaliana (Mouse-ear cress) protein is Putative F-box protein At1g59675.